Reading from the N-terminus, the 154-residue chain is D-aminoacyl-tRNA deacylase (154 aa).

Residues 138–139 (GP) carry the Gly-cisPro motif, important for rejection of L-amino acids motif.

It belongs to the DTD family. Homodimer.

The protein localises to the cytoplasm. The enzyme catalyses glycyl-tRNA(Ala) + H2O = tRNA(Ala) + glycine + H(+). The catalysed reaction is a D-aminoacyl-tRNA + H2O = a tRNA + a D-alpha-amino acid + H(+). Its function is as follows. An aminoacyl-tRNA editing enzyme that deacylates mischarged D-aminoacyl-tRNAs. Also deacylates mischarged glycyl-tRNA(Ala), protecting cells against glycine mischarging by AlaRS. Acts via tRNA-based rather than protein-based catalysis; rejects L-amino acids rather than detecting D-amino acids in the active site. By recycling D-aminoacyl-tRNA to D-amino acids and free tRNA molecules, this enzyme counteracts the toxicity associated with the formation of D-aminoacyl-tRNA entities in vivo and helps enforce protein L-homochirality. In Halorhodospira halophila (strain DSM 244 / SL1) (Ectothiorhodospira halophila (strain DSM 244 / SL1)), this protein is D-aminoacyl-tRNA deacylase.